Here is a 253-residue protein sequence, read N- to C-terminus: 5'-nucleotidase SurE (253 aa).

Residues Asp8, Asp9, Ser39, and Asn95 each contribute to the a divalent metal cation site.

It belongs to the SurE nucleotidase family. Requires a divalent metal cation as cofactor.

The protein resides in the cytoplasm. The catalysed reaction is a ribonucleoside 5'-phosphate + H2O = a ribonucleoside + phosphate. In terms of biological role, nucleotidase that shows phosphatase activity on nucleoside 5'-monophosphates. This is 5'-nucleotidase SurE from Kosmotoga olearia (strain ATCC BAA-1733 / DSM 21960 / TBF 19.5.1).